Here is a 314-residue protein sequence, read N- to C-terminus: MKKGINRVVLVGTGAVGCSYAYCMINQAVAEEFVLVDVNEAKAEGEAMDLSHAVPFAPAPTRVWKGSYEDCKDADLVVITAGLPQKPGETRLDLVEKNAKIFKQIVRSIMDSGFDGIFLIATNPVDILTYVTWKESGLPKERVIGSGTTLDSARFRYMLGEYFNIGPHNIHAYIIGEHGDTELPVWSHVSVGIQKLQTLLEKDNTYNQEDLDKIFINVRDAAYHIIERKGATYYGIGMSLLRVTKAILNDENSVLTVSAYLEGQYGQKDVYIGVPAVLNRGGVREILEVELSEDEELKFDHSVQVLKETMAPVL.

Residues Val-16, Asp-37, Lys-42, Tyr-68, and 82 to 83 contribute to the NAD(+) site; that span reads GL. Substrate-binding positions include Gln-85, Arg-91, and 123-126; that span reads NPVD. NAD(+)-binding positions include 121–123 and Ser-146; that span reads ATN. 151–154 is a binding site for substrate; sequence DSAR. The beta-D-fructose 1,6-bisphosphate site is built by Arg-156 and His-171. Residue His-178 is the Proton acceptor of the active site. Tyr-223 carries the post-translational modification Phosphotyrosine. Thr-232 is a substrate binding site.

This sequence belongs to the LDH/MDH superfamily. LDH family. As to quaternary structure, homotetramer.

It is found in the cytoplasm. The catalysed reaction is (S)-lactate + NAD(+) = pyruvate + NADH + H(+). The protein operates within fermentation; pyruvate fermentation to lactate; (S)-lactate from pyruvate: step 1/1. With respect to regulation, allosterically activated by fructose 1,6-bisphosphate (FBP). Its function is as follows. Catalyzes the conversion of lactate to pyruvate. The polypeptide is L-lactate dehydrogenase 1 (Bacillus anthracis).